We begin with the raw amino-acid sequence, 207 residues long: ATP-dependent Clp protease proteolytic subunit (207 aa).

The active-site Nucleophile is serine 112. The active site involves histidine 137.

The protein belongs to the peptidase S14 family. As to quaternary structure, fourteen ClpP subunits assemble into 2 heptameric rings which stack back to back to give a disk-like structure with a central cavity, resembling the structure of eukaryotic proteasomes.

It localises to the cytoplasm. The enzyme catalyses Hydrolysis of proteins to small peptides in the presence of ATP and magnesium. alpha-casein is the usual test substrate. In the absence of ATP, only oligopeptides shorter than five residues are hydrolyzed (such as succinyl-Leu-Tyr-|-NHMec, and Leu-Tyr-Leu-|-Tyr-Trp, in which cleavage of the -Tyr-|-Leu- and -Tyr-|-Trp bonds also occurs).. In terms of biological role, cleaves peptides in various proteins in a process that requires ATP hydrolysis. Has a chymotrypsin-like activity. Plays a major role in the degradation of misfolded proteins. The sequence is that of ATP-dependent Clp protease proteolytic subunit from Bacteroides fragilis (strain ATCC 25285 / DSM 2151 / CCUG 4856 / JCM 11019 / LMG 10263 / NCTC 9343 / Onslow / VPI 2553 / EN-2).